Reading from the N-terminus, the 248-residue chain is tRNA1(Val) (adenine(37)-N6)-methyltransferase (248 aa).

Belongs to the methyltransferase superfamily. tRNA (adenine-N(6)-)-methyltransferase family.

Its subcellular location is the cytoplasm. The enzyme catalyses adenosine(37) in tRNA1(Val) + S-adenosyl-L-methionine = N(6)-methyladenosine(37) in tRNA1(Val) + S-adenosyl-L-homocysteine + H(+). In terms of biological role, specifically methylates the adenine in position 37 of tRNA(1)(Val) (anticodon cmo5UAC). The chain is tRNA1(Val) (adenine(37)-N6)-methyltransferase from Pectobacterium carotovorum subsp. carotovorum (strain PC1).